The primary structure comprises 174 residues: Co-chaperone protein HscB homolog (174 aa).

Residues 2-74 (NYFELFSLLP…IQRAEHLLTL (73 aa)) enclose the J domain.

The protein belongs to the HscB family. In terms of assembly, interacts with HscA and stimulates its ATPase activity.

Functionally, co-chaperone involved in the maturation of iron-sulfur cluster-containing proteins. Seems to help targeting proteins to be folded toward HscA. This Shewanella halifaxensis (strain HAW-EB4) protein is Co-chaperone protein HscB homolog.